Reading from the N-terminus, the 217-residue chain is Choline transport system permease protein OpuBB (217 aa).

An ABC transmembrane type-1 domain is found at 19 to 198 (TYEHITISLI…ILAIVIDYVL (180 aa)). The next 6 membrane-spanning stretches (helical) occupy residues 23 to 43 (ITIS…LGVV), 52 to 74 (GTII…AFFI), 84 to 101 (AIVA…RNTY), 128 to 148 (LVEL…STIY), 150 to 170 (IGWA…YIFI), and 180 to 200 (IIGG…VLAV).

It belongs to the binding-protein-dependent transport system permease family. CysTW subfamily.

The protein resides in the cell membrane. Its function is as follows. Involved in a high affinity multicomponent binding-protein-dependent transport system for choline; probably responsible for the translocation of the substrate across the membrane. The chain is Choline transport system permease protein OpuBB (opuBB) from Bacillus subtilis (strain 168).